Here is a 597-residue protein sequence, read N- to C-terminus: MKNIRNFSIIAHIDHGKSTLSDRFIQVCNGLSEREMKEQVLDSMDIERERGITIKAQSVTLDYTARDGQTYQLNFIDTPGHVDFSYEVSRSLAACEGALLVVDAAQGVEAQTVANCYTAIEQNLEVIPILNKIDLPSAEPDRVAQEIEEIIGIDATGATTCSAKIGIGVEDVLETIVAKVPAPEGDVNAKLQALIIDSWFDNYLGVVSLVRVKNGTIKKGEKFKVMSTGVAYQVDRLGVFTPKMKDLDHLKAGEVGFIVAGIKDIHGAPVGDTLTHAHNPTDKPVPGFKKVQPQVYAGMFTISSDNYPDFREALEKLSLNDASLFFEPEVSQALGFGFRCGFLGMLHMEIIQERLEREYNLDLITSAPTVVYKAIKKDGEIIEVDNLSKLPEPGAIAEIQEPIVRANILVPKDYVGSVITICIEKRGVQVDLNYVGNQVSITYDLPMIEVVSDFFDTLKSVTKGYGSLDYELIRYEPANMVCLDVLINGDKVDALASIVHKDQAKYKGRELVERLKELIPRQMFEVAIQAAIGGTIVARSTVKALRKNVLAKCYGGDVSRKKKLLEKQKEGKKRMKNIGSVEIPQEAFLSVLKKIKL.

Residues 2–184 (KNIRNFSIIA…TIVAKVPAPE (183 aa)) form the tr-type G domain. GTP-binding positions include 14 to 19 (DHGKST) and 131 to 134 (NKID).

Belongs to the TRAFAC class translation factor GTPase superfamily. Classic translation factor GTPase family. LepA subfamily.

Its subcellular location is the cell inner membrane. The enzyme catalyses GTP + H2O = GDP + phosphate + H(+). Its function is as follows. Required for accurate and efficient protein synthesis under certain stress conditions. May act as a fidelity factor of the translation reaction, by catalyzing a one-codon backward translocation of tRNAs on improperly translocated ribosomes. Back-translocation proceeds from a post-translocation (POST) complex to a pre-translocation (PRE) complex, thus giving elongation factor G a second chance to translocate the tRNAs correctly. Binds to ribosomes in a GTP-dependent manner. This chain is Elongation factor 4, found in Francisella tularensis subsp. mediasiatica (strain FSC147).